Consider the following 222-residue polypeptide: Triosephosphate isomerase (222 aa).

9 to 11 (NYK) is a substrate binding site. His-93 acts as the Electrophile in catalysis. Glu-141 functions as the Proton acceptor in the catalytic mechanism. Substrate is bound by residues Ile-146, Gly-181, and 202-203 (AS).

This sequence belongs to the triosephosphate isomerase family. Homotetramer; dimer of dimers.

Its subcellular location is the cytoplasm. It catalyses the reaction D-glyceraldehyde 3-phosphate = dihydroxyacetone phosphate. The protein operates within carbohydrate biosynthesis; gluconeogenesis. Its pathway is carbohydrate degradation; glycolysis; D-glyceraldehyde 3-phosphate from glycerone phosphate: step 1/1. Its function is as follows. Involved in the gluconeogenesis. Catalyzes stereospecifically the conversion of dihydroxyacetone phosphate (DHAP) to D-glyceraldehyde-3-phosphate (G3P). This Methanosarcina barkeri (strain Fusaro / DSM 804) protein is Triosephosphate isomerase.